We begin with the raw amino-acid sequence, 176 residues long: Large ribosomal subunit protein uL10 (176 aa).

It belongs to the universal ribosomal protein uL10 family. As to quaternary structure, part of the ribosomal stalk of the 50S ribosomal subunit. The N-terminus interacts with L11 and the large rRNA to form the base of the stalk. The C-terminus forms an elongated spine to which L12 dimers bind in a sequential fashion forming a multimeric L10(L12)X complex.

Forms part of the ribosomal stalk, playing a central role in the interaction of the ribosome with GTP-bound translation factors. This Saccharophagus degradans (strain 2-40 / ATCC 43961 / DSM 17024) protein is Large ribosomal subunit protein uL10.